A 65-amino-acid polypeptide reads, in one-letter code: Large ribosomal subunit protein bL32 (65 aa).

Residues 1 to 19 (MAIVPKRKTSKQRKHKRQS) show a composition bias toward basic residues. The segment at 1–21 (MAIVPKRKTSKQRKHKRQSHS) is disordered.

It belongs to the bacterial ribosomal protein bL32 family.

In Mesomycoplasma hyopneumoniae (strain 7448) (Mycoplasma hyopneumoniae), this protein is Large ribosomal subunit protein bL32.